Reading from the N-terminus, the 375-residue chain is Putrescine N-methyltransferase 1 (375 aa).

Polar residues-rich tracts occupy residues 24–50 (HQNGTSEHLNGYQNGTSKHQNGHQNGT) and 57–77 (HQNGTSEQQNGTISHDNGNEL). The interval 24 to 77 (HQNGTSEHLNGYQNGTSKHQNGHQNGTFEHRNGHQNGTSEQQNGTISHDNGNEL) is disordered. A PABS domain is found at 86 to 323 (PGWFSEFSAL…GVIGYMLCST (238 aa)). Residues glutamine 117, glutamate 192, and 223 to 224 (DG) each bind S-adenosyl-L-methionine. Residue aspartate 242 is the Proton acceptor of the active site. Tyrosine 311 is a binding site for S-adenosyl-L-methionine.

Belongs to the class I-like SAM-binding methyltransferase superfamily. Putrescine methyltransferase family. As to expression, predominantly expressed in roots.

It carries out the reaction putrescine + S-adenosyl-L-methionine = N-methylputrescine + S-adenosyl-L-homocysteine + H(+). It participates in alkaloid biosynthesis; nicotine biosynthesis. Functionally, involved in the biosynthesis of pyridine alkaloid natural products, leading mainly to the production of anabasine, anatabine, nicotine and nornicotine, effective deterrents against herbivores with antiparasitic and pesticide properties (neurotoxins); nornicotine serves as the precursor in the synthesis of the carcinogen compound N'-nitrosonornicotine (NNN). Methyltransferase that mediates the conversion of putrescine to N-methylputrescine. Promotes leaves ripening. The chain is Putrescine N-methyltransferase 1 from Nicotiana tabacum (Common tobacco).